Here is a 514-residue protein sequence, read N- to C-terminus: Tryptophan decarboxylase 1 (514 aa).

Residue F104 participates in serotonin binding. 2 residues coordinate pyridoxal 5'-phosphate: T175 and S176. A serotonin-binding site is contributed by H214. T273 contributes to the pyridoxal 5'-phosphate binding site. At K330 the chain carries N6-(pyridoxal phosphate)lysine. Y359 functions as the Proton donor in the catalytic mechanism. 2 residues coordinate pyridoxal 5'-phosphate: V380 and G381.

Belongs to the group II decarboxylase family. In terms of assembly, forms homodimers. Pyridoxal 5'-phosphate is required as a cofactor.

The catalysed reaction is L-tryptophan + H(+) = tryptamine + CO2. It carries out the reaction 5-hydroxy-L-tryptophan + H(+) = serotonin + CO2. Its function is as follows. Involved in serotonin biosynthesis. Catalyzes the decarboxylation of L-tryptophan to produce tryptamine, which is converted to serotonin by tryptamine 5-hydroxylase. May play a major role in serotonin biosynthesis during senescence. Accumulation of serotonin attenuates leaf senescence. Catalyzes the decarboxylation of 5-hydroxy-L-tryptophan to produce serotonin. The sequence is that of Tryptophan decarboxylase 1 from Oryza sativa subsp. japonica (Rice).